Reading from the N-terminus, the 162-residue chain is MIIKVQKTFEKRLINAFMRKGNYIKAEKIYLKVVNRLSTIGIKNSYQFIRETLLKMTPIMGVVKKKRGVKELIYPKYLEPEMGEKLAIKWLKKTVAKFKGELLIENIVEEFVKASKDQGEVVKEKWALYKEVRYAISCNTRKGHHKSFVEQKLKATQRRKWY.

It belongs to the universal ribosomal protein uS7 family. In terms of assembly, part of the small ribosomal subunit.

It localises to the mitochondrion. One of the primary rRNA binding proteins, it binds directly to 16S-like rRNA where it nucleates assembly of the head domain of the small subunit. This chain is Small ribosomal subunit protein uS7m (mrps7), found in Dictyostelium discoideum (Social amoeba).